We begin with the raw amino-acid sequence, 124 residues long: Small ribosomal subunit protein uS12 (124 aa).

The disordered stretch occupies residues 1-22 (MATINQLVRKPRKRKVAKSDVP). Asp89 carries the post-translational modification 3-methylthioaspartic acid. A disordered region spans residues 101–124 (TLDTQGVQNRKQGRSKYGAKRPKS). Residues 111-124 (KQGRSKYGAKRPKS) show a composition bias toward basic residues.

This sequence belongs to the universal ribosomal protein uS12 family. In terms of assembly, part of the 30S ribosomal subunit. Contacts proteins S8 and S17. May interact with IF1 in the 30S initiation complex.

Functionally, with S4 and S5 plays an important role in translational accuracy. In terms of biological role, interacts with and stabilizes bases of the 16S rRNA that are involved in tRNA selection in the A site and with the mRNA backbone. Located at the interface of the 30S and 50S subunits, it traverses the body of the 30S subunit contacting proteins on the other side and probably holding the rRNA structure together. The combined cluster of proteins S8, S12 and S17 appears to hold together the shoulder and platform of the 30S subunit. In Marinobacter nauticus (strain ATCC 700491 / DSM 11845 / VT8) (Marinobacter aquaeolei), this protein is Small ribosomal subunit protein uS12.